Consider the following 361-residue polypeptide: 3-dehydroquinate synthase (361 aa).

Residues 107 to 111, 131 to 132, K144, and K153 each bind NAD(+); these read GVIGD and TS. Positions 186, 251, and 268 each coordinate Zn(2+).

Belongs to the sugar phosphate cyclases superfamily. Dehydroquinate synthase family. Requires NAD(+) as cofactor. Co(2+) serves as cofactor. Zn(2+) is required as a cofactor.

The protein localises to the cytoplasm. It carries out the reaction 7-phospho-2-dehydro-3-deoxy-D-arabino-heptonate = 3-dehydroquinate + phosphate. It functions in the pathway metabolic intermediate biosynthesis; chorismate biosynthesis; chorismate from D-erythrose 4-phosphate and phosphoenolpyruvate: step 2/7. Functionally, catalyzes the conversion of 3-deoxy-D-arabino-heptulosonate 7-phosphate (DAHP) to dehydroquinate (DHQ). This chain is 3-dehydroquinate synthase, found in Synechocystis sp. (strain ATCC 27184 / PCC 6803 / Kazusa).